We begin with the raw amino-acid sequence, 118 residues long: Large ribosomal subunit protein uL18 (118 aa).

The segment at 1–25 is disordered; that stretch reads MISKPDKNKLRQKRHRRVRGKLSGT. Basic residues predominate over residues 10-20; sequence LRQKRHRRVRG.

Belongs to the universal ribosomal protein uL18 family. Part of the 50S ribosomal subunit; part of the 5S rRNA/L5/L18/L25 subcomplex. Contacts the 5S and 23S rRNAs.

This is one of the proteins that bind and probably mediate the attachment of the 5S RNA into the large ribosomal subunit, where it forms part of the central protuberance. In Streptococcus pneumoniae (strain Hungary19A-6), this protein is Large ribosomal subunit protein uL18.